The primary structure comprises 267 residues: Undecaprenyl-diphosphatase (267 aa).

The next 8 helical transmembrane spans lie at 1–21, 39–59, 87–107, 111–131, 149–169, 189–209, 218–238, and 246–266; these read MTYF…FLPI, QGLA…VMYF, WLII…KDFI, LRSA…LWWV, ALFL…RSGI, FLMS…KLAL, FLGT…HFFL, and MTPF…WLAL.

This sequence belongs to the UppP family.

It is found in the cell inner membrane. The catalysed reaction is di-trans,octa-cis-undecaprenyl diphosphate + H2O = di-trans,octa-cis-undecaprenyl phosphate + phosphate + H(+). In terms of biological role, catalyzes the dephosphorylation of undecaprenyl diphosphate (UPP). Confers resistance to bacitracin. The chain is Undecaprenyl-diphosphatase from Aliivibrio salmonicida (strain LFI1238) (Vibrio salmonicida (strain LFI1238)).